The chain runs to 120 residues: ATP-dependent Clp protease adapter protein ClpS (120 aa).

The protein belongs to the ClpS family. Binds to the N-terminal domain of the chaperone ClpA.

Functionally, involved in the modulation of the specificity of the ClpAP-mediated ATP-dependent protein degradation. This chain is ATP-dependent Clp protease adapter protein ClpS, found in Pseudomonas fluorescens (strain ATCC BAA-477 / NRRL B-23932 / Pf-5).